The primary structure comprises 202 residues: LexA repressor (202 aa).

Positions 28–48 form a DNA-binding region, H-T-H motif; it reads RAEIAQRLGFRSPNAAEEHLK. Catalysis depends on for autocatalytic cleavage activity residues Ser119 and Lys156.

It belongs to the peptidase S24 family. In terms of assembly, homodimer.

It catalyses the reaction Hydrolysis of Ala-|-Gly bond in repressor LexA.. Its function is as follows. Represses a number of genes involved in the response to DNA damage (SOS response), including recA and lexA. Binds to the 16 bp palindromic sequence 5'-CTGTATATATATACAG-3'. In the presence of single-stranded DNA, RecA interacts with LexA causing an autocatalytic cleavage which disrupts the DNA-binding part of LexA, leading to derepression of the SOS regulon and eventually DNA repair. The chain is LexA repressor from Yersinia enterocolitica serotype O:8 / biotype 1B (strain NCTC 13174 / 8081).